Consider the following 224-residue polypeptide: Glutathione peroxidase 3 (224 aa).

A signal peptide spans 1 to 18; the sequence is MAPGSVLSLAVALATIIG. Asn-38 carries N-linked (GlcNAc...) asparagine glycosylation. Cys-73 is a catalytic residue.

Belongs to the glutathione peroxidase family.

The protein localises to the secreted. Its subcellular location is the extracellular space. It catalyses the reaction 2 glutathione + H2O2 = glutathione disulfide + 2 H2O. The sequence is that of Glutathione peroxidase 3 (gpx-3) from Caenorhabditis elegans.